Here is a 304-residue protein sequence, read N- to C-terminus: MNRKGNLSMTTQLQHLTLPEDIQQKLLSYKEQPISPEFQSLIGTSGYEAEDEAILFDAIIALAMGKNVLLKGPTGSGKTKLAETLSSYFHKPMHSVNCSVDLDAEALVGYKTIENQSGQATIEFVSGPVTKAMKEGHFLYIDEINMAKPETLPILNGVLDYRKMMTNPFTGEVIRAKSGFGVIAAINEGYVGTVPLNEALKNRFVIIDVPYIKGELLKQVLMSQSALKDEKLIDRFITLSSDLIVQANNGQVSEEAASIRALIDTCDLAAYIPPRRAIERGIVEKLDDDREKAAVRNIAETLFE.

72–79 (GPTGSGKT) serves as a coordination point for ATP.

It belongs to the CbbQ/NirQ/NorQ/GpvN family.

This is an uncharacterized protein from Bacillus subtilis (strain 168).